Consider the following 964-residue polypeptide: E3 ubiquitin-protein ligase TRIM37 (964 aa).

Position 1 is an N-acetylmethionine (methionine 1). The RING-type; degenerate zinc-finger motif lies at 15–55 (CFICMEKLRDARLCPHCSKLCCFSCIRRWLTEQRAQCPHCR). The segment at 90–132 (NEKDKCENHHEKLSVFCWTCKKCICHQCALWGGMHGGHTFKPL) adopts a B box-type zinc-finger fold. The Zn(2+) site is built by cysteine 95, histidine 98, cysteine 117, and histidine 124. The stretch at 132 to 234 (LAEIYEQHVT…VEHQLRSCSK (103 aa)) forms a coiled coil. The MATH domain maps to 276 to 403 (YDSATFVLEN…NDTVILRFQV (128 aa)). Residues 419–450 (ITQLEAAQTSYIQQINNLKERLTIELSRTQKS) adopt a coiled-coil conformation. Serine 454 carries the post-translational modification Phosphoserine. Disordered stretches follow at residues 477–513 (CSDMLLEGGPTTASVREAKEDEEDEEKIQNEDYHHEL), 530–554 (QLDGSSSSASSTATSNTEENDIDEE), and 640–663 (RPPASLLQPTASYSRKDKDQRKQQ). Positions 503–513 (KIQNEDYHHEL) are enriched in basic and acidic residues. Low complexity predominate over residues 534–544 (SSSSASSTATS). Residues 673–700 (KMLKRLKTQMAEVRCMKTDVKNTLSEIK) are a coiled coil. A compositionally biased stretch (polar residues) spans 752-761 (NSTNKKSNSP). Disordered regions lie at residues 752–812 (NSTN…SPRA) and 891–964 (GASA…NSGR). The segment covering 776–788 (RAVDPGENSRSKG) has biased composition (basic and acidic residues). Over residues 794–807 (SEGSPGSSQSGSRH) the composition is skewed to low complexity. The segment covering 904-916 (SDIECDTENEEQE) has biased composition (acidic residues). A compositionally biased stretch (polar residues) spans 955-964 (SFNTDENSGR).

It belongs to the TRIM/RBCC family. As to quaternary structure, associates with the PRC2/EED-EZH2 complex. Auto-ubiquitinated. Ubiquitous. Highly expressed in testis, while it is weakly expressed in other tissues.

The protein resides in the chromosome. It localises to the cytoplasm. It is found in the perinuclear region. Its subcellular location is the peroxisome membrane. The catalysed reaction is S-ubiquitinyl-[E2 ubiquitin-conjugating enzyme]-L-cysteine + [acceptor protein]-L-lysine = [E2 ubiquitin-conjugating enzyme]-L-cysteine + N(6)-ubiquitinyl-[acceptor protein]-L-lysine.. Its pathway is protein modification; protein ubiquitination. E3 ubiquitin-protein ligase required to prevent centriole reduplication. Probably acts by ubiquitinating positive regulators of centriole reduplication. Mediates monoubiquitination of 'Lys-119' of histone H2A (H2AK119Ub), a specific tag for epigenetic transcriptional repression: associates with some Polycomb group (PcG) multiprotein PRC2-like complex and mediates repression of target genes. Also acts as a positive regulator of peroxisome import by mediating monoubiquitination of PEX5 at 'Lys-472': monoubiquitination promotes PEX5 stabilitation by preventing its polyubiquitination and degradation by the proteasome. Has anti-HIV activity. This is E3 ubiquitin-protein ligase TRIM37 from Homo sapiens (Human).